Reading from the N-terminus, the 138-residue chain is Lutropin subunit beta (138 aa).

An N-terminal signal peptide occupies residues 1 to 19 (RYQELTVLLLLLLEGGSWG). 6 disulfides stabilise this stretch: C27/C75, C41/C90, C44/C128, C52/C106, C56/C108, and C111/C118. The N-linked (GlcNAc...) asparagine glycan is linked to N31.

Belongs to the glycoprotein hormones subunit beta family. As to quaternary structure, heterodimer of a common alpha chain and a unique beta chain which confers biological specificity to thyrotropin, lutropin, follitropin and gonadotropin.

Its subcellular location is the secreted. Its function is as follows. Promotes spermatogenesis and ovulation by stimulating the testes and ovaries to synthesize steroids. In Osphranter rufus (Red kangaroo), this protein is Lutropin subunit beta (LHB).